Reading from the N-terminus, the 714-residue chain is ABC transporter B family member 28 (714 aa).

5 consecutive transmembrane segments (helical) span residues 109–129 (LSVC…MPVF), 161–181 (IFTI…MAIL), 240–260 (ICIL…LMLA), 340–360 (VAVY…VKTG), and 361–381 (ELAV…TFAV). The ABC transmembrane type-1 domain occupies 109 to 393 (LSVCLLTLLG…LVNTFGDLRG (285 aa)). One can recognise an ABC transporter domain in the interval 470-708 (VCLDDVHFAY…KGSYASLVGT (239 aa)). Residue 505–512 (GSSGAGKS) coordinates ATP.

It belongs to the ABC transporter superfamily. ABCB family. Multidrug resistance exporter (TC 3.A.1.201) subfamily.

It localises to the membrane. This is ABC transporter B family member 28 (ABCB28) from Arabidopsis thaliana (Mouse-ear cress).